The chain runs to 231 residues: Putative N-acetylmannosamine-6-phosphate 2-epimerase (231 aa).

The protein belongs to the NanE family.

The enzyme catalyses an N-acyl-D-glucosamine 6-phosphate = an N-acyl-D-mannosamine 6-phosphate. It functions in the pathway amino-sugar metabolism; N-acetylneuraminate degradation; D-fructose 6-phosphate from N-acetylneuraminate: step 3/5. In terms of biological role, converts N-acetylmannosamine-6-phosphate (ManNAc-6-P) to N-acetylglucosamine-6-phosphate (GlcNAc-6-P). The sequence is that of Putative N-acetylmannosamine-6-phosphate 2-epimerase from Glaesserella parasuis serovar 5 (strain SH0165) (Haemophilus parasuis).